Here is a 1451-residue protein sequence, read N- to C-terminus: Protein clueless (1451 aa).

Disordered stretches follow at residues 1-101 (MALE…EYAA) and 264-286 (KKTR…VSEP). The segment covering 9-53 (NSNATATGDATATKASSKAKENNNTAGGKKNLNPIPSQQNSNQNL) has biased composition (low complexity). Basic residues predominate over residues 66–75 (GKKKGKKNRN). Ser270 carries the phosphoserine modification. One can recognise a Clu domain in the interval 424 to 666 (RAEDAFSSKL…RTFPPDVNFL (243 aa)). Disordered stretches follow at residues 722–775 (AKKQ…ESKT), 961–1012 (AVSS…SSVS), and 1413–1451 (ANNN…ATSS). Positions 748–758 (GADKTDVKEEK) are enriched in basic and acidic residues. Residues 969 to 984 (KKRGNGGKHNKHKSSK) show a composition bias toward basic residues. The span at 989 to 1010 (QQQQQTTGNQNGSSSGTSNGSS) shows a compositional bias: low complexity.

This sequence belongs to the CLU family.

It is found in the cytoplasm. Functionally, mRNA-binding protein involved in proper cytoplasmic distribution of mitochondria. The sequence is that of Protein clueless from Drosophila yakuba (Fruit fly).